A 78-amino-acid chain; its full sequence is Keratin-associated protein 6-5 (78 aa).

Residues 3–76 (GYYGNYYGGR…GSGYGSGFGY (74 aa)) form a 25 X 2 AA repeats of G-[YCGS] region.

Belongs to the KRTAP type 6 family. Interacts with hair keratins. As to expression, strong expression in narrowly defined pattern restricted to the lower and middle cortical regions of the hair shaft in both developing and cycling hair. During hair follicle regression (catagen), expression levels decrease until expression is no longer detectable in follicles at resting stage (telogen).

Functionally, in the hair cortex, hair keratin intermediate filaments are embedded in an interfilamentous matrix, consisting of hair keratin-associated proteins (KRTAP), which are essential for the formation of a rigid and resistant hair shaft through their extensive disulfide bond cross-linking with abundant cysteine residues of hair keratins. The matrix proteins include the high-sulfur and high-glycine-tyrosine keratins. The chain is Keratin-associated protein 6-5 (Krtap6-5) from Mus musculus (Mouse).